The primary structure comprises 274 residues: 4-deoxy-L-threo-5-hexosulose-uronate ketol-isomerase (274 aa).

Histidine 192, histidine 194, glutamate 199, and histidine 241 together coordinate Zn(2+).

This sequence belongs to the KduI family. It depends on Zn(2+) as a cofactor.

It carries out the reaction 5-dehydro-4-deoxy-D-glucuronate = 3-deoxy-D-glycero-2,5-hexodiulosonate. It participates in glycan metabolism; pectin degradation; 2-dehydro-3-deoxy-D-gluconate from pectin: step 4/5. In terms of biological role, catalyzes the isomerization of 5-dehydro-4-deoxy-D-glucuronate to 3-deoxy-D-glycero-2,5-hexodiulosonate. The chain is 4-deoxy-L-threo-5-hexosulose-uronate ketol-isomerase from Cereibacter sphaeroides (strain ATCC 17029 / ATH 2.4.9) (Rhodobacter sphaeroides).